Here is a 343-residue protein sequence, read N- to C-terminus: uncharacterized protein (343 aa).

This is an uncharacterized protein from Methanocaldococcus jannaschii (strain ATCC 43067 / DSM 2661 / JAL-1 / JCM 10045 / NBRC 100440) (Methanococcus jannaschii).